Here is a 382-residue protein sequence, read N- to C-terminus: UDP-4-amino-4-deoxy-L-arabinose--oxoglutarate aminotransferase (382 aa).

K182 is modified (N6-(pyridoxal phosphate)lysine).

Belongs to the DegT/DnrJ/EryC1 family. ArnB subfamily. Homodimer. It depends on pyridoxal 5'-phosphate as a cofactor.

It carries out the reaction UDP-4-amino-4-deoxy-beta-L-arabinose + 2-oxoglutarate = UDP-beta-L-threo-pentopyranos-4-ulose + L-glutamate. Its pathway is nucleotide-sugar biosynthesis; UDP-4-deoxy-4-formamido-beta-L-arabinose biosynthesis; UDP-4-deoxy-4-formamido-beta-L-arabinose from UDP-alpha-D-glucuronate: step 2/3. It functions in the pathway bacterial outer membrane biogenesis; lipopolysaccharide biosynthesis. Its function is as follows. Catalyzes the conversion of UDP-4-keto-arabinose (UDP-Ara4O) to UDP-4-amino-4-deoxy-L-arabinose (UDP-L-Ara4N). The modified arabinose is attached to lipid A and is required for resistance to polymyxin and cationic antimicrobial peptides. In Pectobacterium atrosepticum (strain SCRI 1043 / ATCC BAA-672) (Erwinia carotovora subsp. atroseptica), this protein is UDP-4-amino-4-deoxy-L-arabinose--oxoglutarate aminotransferase.